We begin with the raw amino-acid sequence, 379 residues long: Chaperone protein DnaJ (379 aa).

The region spanning aspartate 5–glycine 70 is the J domain. The segment at glycine 139–glutamine 217 adopts a CR-type zinc-finger fold. Zn(2+) is bound by residues cysteine 152, cysteine 155, cysteine 169, cysteine 172, cysteine 191, cysteine 194, cysteine 205, and cysteine 208. 4 CXXCXGXG motif repeats span residues cysteine 152–glycine 159, cysteine 169–glycine 176, cysteine 191–glycine 198, and cysteine 205–glycine 212. The disordered stretch occupies residues valine 356–serine 379.

The protein belongs to the DnaJ family. As to quaternary structure, homodimer. It depends on Zn(2+) as a cofactor.

It localises to the cytoplasm. Functionally, participates actively in the response to hyperosmotic and heat shock by preventing the aggregation of stress-denatured proteins and by disaggregating proteins, also in an autonomous, DnaK-independent fashion. Unfolded proteins bind initially to DnaJ; upon interaction with the DnaJ-bound protein, DnaK hydrolyzes its bound ATP, resulting in the formation of a stable complex. GrpE releases ADP from DnaK; ATP binding to DnaK triggers the release of the substrate protein, thus completing the reaction cycle. Several rounds of ATP-dependent interactions between DnaJ, DnaK and GrpE are required for fully efficient folding. Also involved, together with DnaK and GrpE, in the DNA replication of plasmids through activation of initiation proteins. The chain is Chaperone protein DnaJ from Cupriavidus pinatubonensis (strain JMP 134 / LMG 1197) (Cupriavidus necator (strain JMP 134)).